The following is a 100-amino-acid chain: Sodium-influx-stimulating peptide (100 aa).

The signal sequence occupies residues 1–23; the sequence is MLSSVALRYLLVLSLAFLAVVTS.

Post-translationally, three disulfide bonds are present. In terms of tissue distribution, expressed by the yellow cells, peptidergic (neuroendocrine) neurons of the central nervous system.

Functionally, stimulates integumental Na(+) uptake. Controls the activity of sodium pumps in the integument, pericardium, ureter and nephridial gland. The protein is Sodium-influx-stimulating peptide (SIS) of Lymnaea stagnalis (Great pond snail).